The chain runs to 522 residues: Putative zinc finger protein 286B (522 aa).

Positions 1 to 30 are disordered; sequence METDLAEMPEKGVLSSQDSPHFQEKSTEEG. 10 consecutive C2H2-type zinc fingers follow at residues 244–266, 272–294, 299–321, 327–349, 355–377, 383–405, 411–433, 439–461, 467–489, and 495–517; these read HKCNDCGELFTCHSVHIQHQRVH, YTCNECGKSFSHRANLTKHQRTH, FECRECKKTFTESSSLATHQRIH, YECNECGKGFNRSTHLVQHQLIH, YECNECDKAFIHSSALIKHQRTH, YKCQECGKAFSHCSSLTKHQRVH, YECSECGKTFSQSTHLVQHQRIH, YECSECGKTFSQSSNFAKHQRIH, YKCSECGKAFIHSSALIQHQRTH, and FRCNECGKSFKCSSSLIRHQRVH.

Belongs to the krueppel C2H2-type zinc-finger protein family.

The protein localises to the nucleus. Functionally, may be involved in transcriptional regulation. The polypeptide is Putative zinc finger protein 286B (ZNF286B) (Homo sapiens (Human)).